Consider the following 69-residue polypeptide: Toxin Tma2 (69 aa).

In terms of domain architecture, LCN-type CS-alpha/beta spans 2–66; it reads KDDYPVDTAE…SPTKTSKRCN (65 aa). Disulfide bonds link C14-C65, C18-C41, C27-C48, and C31-C50.

Belongs to the long (4 C-C) scorpion toxin superfamily. Sodium channel inhibitor family. As to expression, expressed by the venom gland.

It is found in the secreted. Its function is as follows. Inhibits voltage-gated sodium channels (Nav). This toxin shows insect lethality against crickets. The protein is Toxin Tma2 of Tityus macrochirus (Scorpion).